We begin with the raw amino-acid sequence, 180 residues long: Adenine phosphoribosyltransferase (180 aa).

Residue S2 is modified to N-acetylserine. 3 positions are modified to phosphoserine: S4, S15, and S30. A Phosphotyrosine modification is found at Y60. S66 carries the post-translational modification Phosphoserine. K114 carries the N6-acetyllysine modification. Position 135 is a phosphothreonine (T135).

The protein belongs to the purine/pyrimidine phosphoribosyltransferase family. Homodimer.

It localises to the cytoplasm. The enzyme catalyses AMP + diphosphate = 5-phospho-alpha-D-ribose 1-diphosphate + adenine. Its pathway is purine metabolism; AMP biosynthesis via salvage pathway; AMP from adenine: step 1/1. Functionally, catalyzes a salvage reaction resulting in the formation of AMP, that is energically less costly than de novo synthesis. The chain is Adenine phosphoribosyltransferase from Rattus norvegicus (Rat).